The sequence spans 334 residues: Glycerol-3-phosphate dehydrogenase [NAD(P)+] 2 (334 aa).

Positions 16, 36, 37, and 110 each coordinate NADPH. Residues lysine 110 and glycine 140 each coordinate sn-glycerol 3-phosphate. Position 144 (alanine 144) interacts with NADPH. Residues lysine 195, aspartate 248, serine 258, arginine 259, and asparagine 260 each contribute to the sn-glycerol 3-phosphate site. Residue lysine 195 is the Proton acceptor of the active site. Arginine 259 contacts NADPH. Residues valine 282 and glutamate 284 each coordinate NADPH.

It belongs to the NAD-dependent glycerol-3-phosphate dehydrogenase family.

The protein localises to the cytoplasm. It carries out the reaction sn-glycerol 3-phosphate + NAD(+) = dihydroxyacetone phosphate + NADH + H(+). It catalyses the reaction sn-glycerol 3-phosphate + NADP(+) = dihydroxyacetone phosphate + NADPH + H(+). It functions in the pathway membrane lipid metabolism; glycerophospholipid metabolism. Catalyzes the reduction of the glycolytic intermediate dihydroxyacetone phosphate (DHAP) to sn-glycerol 3-phosphate (G3P), the key precursor for phospholipid synthesis. This chain is Glycerol-3-phosphate dehydrogenase [NAD(P)+] 2, found in Mycobacterium tuberculosis (strain ATCC 25618 / H37Rv).